The chain runs to 607 residues: Threonine--tRNA ligase (607 aa).

The interval 1–143 (MRVLYIHAER…SFKPEEARVA (143 aa)) is editing domain. Catalytic stretches follow at residues 193 to 489 (PRYL…PRLP) and 194 to 489 (RYLD…PRLP). 3 residues coordinate Zn(2+): cysteine 286, histidine 337, and histidine 458.

Belongs to the class-II aminoacyl-tRNA synthetase family. Homodimer. Zn(2+) is required as a cofactor.

The protein localises to the cytoplasm. It catalyses the reaction tRNA(Thr) + L-threonine + ATP = L-threonyl-tRNA(Thr) + AMP + diphosphate + H(+). Functionally, catalyzes the attachment of threonine to tRNA(Thr) in a two-step reaction: L-threonine is first activated by ATP to form Thr-AMP and then transferred to the acceptor end of tRNA(Thr). Also edits incorrectly charged L-seryl-tRNA(Thr). The sequence is that of Threonine--tRNA ligase from Pyrobaculum calidifontis (strain DSM 21063 / JCM 11548 / VA1).